Here is a 445-residue protein sequence, read N- to C-terminus: StAR-related lipid transfer protein 3 (445 aa).

The Cytoplasmic segment spans residues 1-51 (MSKLPGELARDLECSLPAVASLGSSLSHSQSLSSHLLPPPEKRRAISDVRR). The MENTAL domain maps to 46–217 (ISDVRRTFCL…YSPPESFAGS (172 aa)). A helical transmembrane segment spans residues 52 to 72 (TFCLFVTFDLLFISLLWIIEL). Over 73–94 (NTNTGIRKNLEQEIIQYNFKTS) the chain is Extracellular. Residues 95 to 115 (FFDIFVLAFFRFSGLLLGYAV) traverse the membrane as a helical segment. Residues 116–120 (LRLQH) lie on the Cytoplasmic side of the membrane. Residues 121-141 (WWVIAVTTLVSSAFLIVKVIL) traverse the membrane as a helical segment. Residues 142-148 (SELLSKG) lie on the Extracellular side of the membrane. Residues 149–169 (AFGYLLPIVSFVLAWLETWFL) form a helical membrane-spanning segment. The Cytoplasmic portion of the chain corresponds to 170–445 (DFKVLPQEAE…QRISELGARA (276 aa)). 2 short sequence motifs (FFAT) span residues 206–212 (QFYSPPE) and 207–212 (FYSPPE). Serine 209, serine 217, and serine 221 each carry phosphoserine. An START domain is found at 248–443 (VVDQILAQEE…LRQRISELGA (196 aa)).

Belongs to the STARD3 family. As to quaternary structure, homodimer. Interacts (via the MENTAL domain) with STARD3NL. Interacts (via phosphorylated FFAT motif) with VAPA (via MSP domain). Interacts (via phosphorylated FFAT motif) with VAPB (via MSP domain). Interacts (via phosphorylated FFAT motif) with MOSPD2 (via MSP domain); this interaction allows enrichment of MOSPD2 around endosomes. In terms of processing, phosphorylation at Ser-209 is necessary and sufficient for the direct interaction of the phosphorylated FFAT motif with the MSP domain of MOSPD2, VAPA and VAPB and allows the tethering of two membranes that participates in the formation of ER-endosome contacts. Phosphorylation of the FFAT motif leads to conformation changes. Additional phosphorylations around the core FFAT motif (QFYSPPE) are not essential but strengthen the interaction with MOSPD2, VAPA and VAPB. Phosphorylation at Ser-209 of FFAT motif drives membrane tethering between the endoplasmic reticulum and late endosomes via interaction with VAPA and VAPB that in turn allows the efficient transport of sterol mediated by the START domain. As to expression, present in retina. Localizes to all neurons of macular retina and especially cone inner segments and axons (at protein level).

The protein localises to the late endosome membrane. It carries out the reaction cholesterol(in) = cholesterol(out). In terms of biological role, sterol-binding protein that mediates cholesterol transport from the endoplasmic reticulum to endosomes. The sterol transport mechanism is triggered by phosphorylation of FFAT motif that leads to membrane tethering between the endoplasmic reticulum and late endosomes via interaction with VAPA and VAPB. Acts as a lipid transfer protein that redirects sterol to the endosome at the expense of the cell membrane and favors membrane formation inside endosomes. May also mediate cholesterol transport between other membranes, such as mitochondria membrane or cell membrane. However, such results need additional experimental evidences; probably mainly mediates cholesterol transport from the endoplasmic reticulum to endosomes. Does not activate transcriptional cholesterol sensing. Able to bind other lipids, such as lutein, a xanthophyll carotenoids that form the macular pigment of the retina. Able to bind other lipids, such as lutein, a xanthophyll carotenoids that form the macular pigment of the retina. The chain is StAR-related lipid transfer protein 3 from Macaca mulatta (Rhesus macaque).